The primary structure comprises 1496 residues: Synaptojanin-2 (1496 aa).

An SAC domain is found at 120–444; sequence LKKILSSGVF…GHGLSKVFTG (325 aa). The RRM domain occupies 906 to 985; the sequence is DATVIVNLQS…RAVKIRPKTK (80 aa). 6 disordered regions span residues 1047-1083, 1100-1149, 1205-1357, 1393-1413, 1442-1461, and 1468-1496; these read VVSD…HPTY, GNFR…GTHG, VPES…LQVL, SSAI…AASF, EPLD…SAQV, and RGLP…TLGV. A compositionally biased stretch (low complexity) spans 1063-1074; sequence SASTPASKSPAL. A compositionally biased stretch (pro residues) spans 1116-1130; that stretch reads RPRPPHPPQRPPPPT. Serine 1139 carries the phosphoserine modification. Residues 1139–1149 are compositionally biased toward polar residues; sequence SDASISSGTHG. 2 stretches are compositionally biased toward pro residues: residues 1230–1239 and 1279–1292; these read PVLPRRPVPR and TPPP…PVPK. Over residues 1324-1338 the composition is skewed to low complexity; sequence ELSSPEAPEAPSLAP. 2 stretches are compositionally biased toward basic and acidic residues: residues 1470 to 1480 and 1487 to 1496; these read LPPDHGGKDFS and NKDKRTTLGV.

It belongs to the synaptojanin family. In the central section; belongs to the inositol 1,4,5-trisphosphate 5-phosphatase family. In terms of assembly, binds to GRB2. Isoform 2A binds to SYNJ2BP/OMP25. In terms of tissue distribution, widely expressed. Isoforms 2B1 and 2B2 are concentrated at nerve terminals in brain and at spermatid manchette in testis.

Its subcellular location is the cytoplasm. It is found in the cell membrane. The protein localises to the presynapse. It localises to the cytoskeleton. The protein resides in the membrane raft. Its subcellular location is the mitochondrion. The enzyme catalyses a 1,2-diacyl-sn-glycero-3-phospho-(1D-myo-inositol-4,5-bisphosphate) + H2O = a 1,2-diacyl-sn-glycero-3-phospho-(1D-myo-inositol 4-phosphate) + phosphate. In terms of biological role, inositol 5-phosphatase which may be involved in distinct membrane trafficking and signal transduction pathways. May mediate the inhibitory effect of Rac1 on endocytosis. This chain is Synaptojanin-2 (Synj2), found in Rattus norvegicus (Rat).